A 210-amino-acid polypeptide reads, in one-letter code: MSKLKIDTKRRFSLLIALVLIISLSSCATTQTNVTAITTKTVFNQETTYHNLLKLKKWQANGFIGIIYDNQAESANYTYLQDGDNFSIKLYGPLGIGSIEIKGDTNSVSLANSKGQKLTAKDAKTLMLEQLGWYVPVEGLKYWIKAIAIPNIRQTSELNTNNLLSKLSQNGWSISYSNYQLVDSKYPLPTKIRMSRDNLTLKIVIKSWQI.

Positions 1–26 (MSKLKIDTKRRFSLLIALVLIISLSS) are cleaved as a signal peptide. Residue Cys27 is the site of N-palmitoyl cysteine attachment. Cys27 is lipidated: S-diacylglycerol cysteine.

Belongs to the LolB family. As to quaternary structure, monomer.

Its subcellular location is the cell outer membrane. Functionally, plays a critical role in the incorporation of lipoproteins in the outer membrane after they are released by the LolA protein. This is Outer-membrane lipoprotein LolB from Francisella tularensis subsp. holarctica (strain FTNF002-00 / FTA).